Reading from the N-terminus, the 195-residue chain is Penicillin-binding protein activator LpoB (195 aa).

Residues 1-16 (MKKYLFVALAALVLTG) form the signal peptide. Cys17 carries the N-palmitoyl cysteine lipid modification. A lipid anchor (S-diacylglycerol cysteine) is attached at Cys17. Residues 19 to 55 (SRPPEPEQPQPPVTVEPVTPPVVEEPQPPVTEPVPQP) form a disordered region. Pro residues-rich tracts occupy residues 24-38 (PEQPQPPVTVEPVTP) and 44-55 (PQPPVTEPVPQP).

Belongs to the LpoB family. As to quaternary structure, interacts with PBP1b.

Its subcellular location is the cell outer membrane. Regulator of peptidoglycan synthesis that is essential for the function of penicillin-binding protein 1B (PBP1b). The chain is Penicillin-binding protein activator LpoB from Serratia proteamaculans (strain 568).